We begin with the raw amino-acid sequence, 300 residues long: Meiotically up-regulated gene 165 protein (300 aa).

Disordered stretches follow at residues 1-38 (MLEK…HKPS) and 50-109 (TNSS…STLE). Residues 21-38 (ESHTFSSQTDDSYFHKPS) are compositionally biased toward polar residues. Over residues 52 to 69 (SSVPSASRSPESIASSQS) the composition is skewed to low complexity. Residues 94 to 103 (TLRKRGRKPK) are compositionally biased toward basic residues.

The protein localises to the nucleus. Has a role in meiosis. This Schizosaccharomyces pombe (strain 972 / ATCC 24843) (Fission yeast) protein is Meiotically up-regulated gene 165 protein (mug165).